The sequence spans 520 residues: MNTTVSNQTPRIRIFDTTLRDGEQSPGCSMTPQQKLVMARALDELGVDIIETGFPASSHSDREAVAMMGRELRRPTLAVLSRCLQADIETSAKALETAANPRLHVFLSTSPLHREHKLRMSREQVLESVHRHVTLARGYIDDVEFSAEDATRTEEDFLAEVTRVAIAAGATTINLPDTVGFTTPEEIRGMFSRLIASVEGADKVIFSAHCHNDLGLAVANSLAAIEGGARQVECTINGIGERAGNCALEEITMALKVRGAFYNIDSAINTPRIVSTSQLLQRLVGMPVQRNKAVVGGNAFAHESGIHQHGMLRHRGTYEIMRPEDVGWESSQMVLGRHSGRAAVEQRLRALGYLLEEEEVKLVFEQFKALCEKQRVVTDADLQALMQDATVQEGYRLASMTISDVGSRANALVELSDPEGNRVAETAQGNGPVDALFGALASATGVKLELDSYQVHSVGIGADARGEASLSVRHDGVEYEGTGTSKDIIEASALAWLDVANRLLRQRERGVVAGKTAAVA.

The 263-residue stretch at 12–274 (IRIFDTTLRD…DSAINTPRIV (263 aa)) folds into the Pyruvate carboxyltransferase domain. Positions 21, 209, 211, and 245 each coordinate Mn(2+). Positions 396-520 (RLASMTISDV…VVAGKTAAVA (125 aa)) are regulatory domain.

Belongs to the alpha-IPM synthase/homocitrate synthase family. LeuA type 1 subfamily. In terms of assembly, homodimer. The cofactor is Mn(2+).

Its subcellular location is the cytoplasm. It carries out the reaction 3-methyl-2-oxobutanoate + acetyl-CoA + H2O = (2S)-2-isopropylmalate + CoA + H(+). It participates in amino-acid biosynthesis; L-leucine biosynthesis; L-leucine from 3-methyl-2-oxobutanoate: step 1/4. Its function is as follows. Catalyzes the condensation of the acetyl group of acetyl-CoA with 3-methyl-2-oxobutanoate (2-ketoisovalerate) to form 3-carboxy-3-hydroxy-4-methylpentanoate (2-isopropylmalate). The sequence is that of 2-isopropylmalate synthase from Xanthomonas euvesicatoria pv. vesicatoria (strain 85-10) (Xanthomonas campestris pv. vesicatoria).